A 430-amino-acid chain; its full sequence is Enolase (430 aa).

Gln167 contributes to the (2R)-2-phosphoglycerate binding site. Glu209 serves as the catalytic Proton donor. Mg(2+) contacts are provided by Asp246, Glu287, and Asp314. Residues Lys339, Arg368, Ser369, and Lys390 each coordinate (2R)-2-phosphoglycerate. The active-site Proton acceptor is the Lys339.

The protein belongs to the enolase family. Mg(2+) serves as cofactor.

It localises to the cytoplasm. It is found in the secreted. The protein localises to the cell surface. It carries out the reaction (2R)-2-phosphoglycerate = phosphoenolpyruvate + H2O. The protein operates within carbohydrate degradation; glycolysis; pyruvate from D-glyceraldehyde 3-phosphate: step 4/5. Its function is as follows. Catalyzes the reversible conversion of 2-phosphoglycerate (2-PG) into phosphoenolpyruvate (PEP). It is essential for the degradation of carbohydrates via glycolysis. This Prochlorococcus marinus (strain MIT 9215) protein is Enolase.